The chain runs to 180 residues: MAARLRERYEKEIRSELMKELGFANPMQAPKLEKIVVNMGLGEAINNGKIIDASVEQLSAITGQKPVVTKARKSIANFKLRQGQSIGAMVTLRGDRMYEFFDRLVSIALPRVRDFKGVSPKAFDGKGNYTLGVREQIIFPEINYDKVEKIKGMNITVVTTARNDEEGRALLRHLGMPFRQ.

Belongs to the universal ribosomal protein uL5 family. In terms of assembly, part of the 50S ribosomal subunit; part of the 5S rRNA/L5/L18/L25 subcomplex. Contacts the 5S rRNA and the P site tRNA. Forms a bridge to the 30S subunit in the 70S ribosome.

This is one of the proteins that bind and probably mediate the attachment of the 5S RNA into the large ribosomal subunit, where it forms part of the central protuberance. In the 70S ribosome it contacts protein S13 of the 30S subunit (bridge B1b), connecting the 2 subunits; this bridge is implicated in subunit movement. Contacts the P site tRNA; the 5S rRNA and some of its associated proteins might help stabilize positioning of ribosome-bound tRNAs. The polypeptide is Large ribosomal subunit protein uL5 (Anaeromyxobacter sp. (strain Fw109-5)).